The sequence spans 540 residues: GMP synthase [glutamine-hydrolyzing] (540 aa).

The Glutamine amidotransferase type-1 domain maps to I26–T216. C103 (nucleophile) is an active-site residue. Catalysis depends on residues H190 and E192. Residues W217 to R415 form the GMPS ATP-PPase domain. An ATP-binding site is contributed by S244–S250.

Homodimer.

It catalyses the reaction XMP + L-glutamine + ATP + H2O = GMP + L-glutamate + AMP + diphosphate + 2 H(+). The protein operates within purine metabolism; GMP biosynthesis; GMP from XMP (L-Gln route): step 1/1. Functionally, catalyzes the synthesis of GMP from XMP. The protein is GMP synthase [glutamine-hydrolyzing] of Nostoc sp. (strain PCC 7120 / SAG 25.82 / UTEX 2576).